We begin with the raw amino-acid sequence, 716 residues long: Mitogen-activated protein kinase kinase kinase 5 (716 aa).

The segment covering 1-27 has biased composition (low complexity); the sequence is MRWLPQISFSSPSSSPSSSLKPVASYS. Disordered stretches follow at residues 1–42, 74–98, 119–180, and 238–302; these read MRWL…DRFH, ASTSSSTFDSGLTRSPSAFTAVPRS, AANA…YWVN, and YDIT…VTNG. Positions 31–40 are enriched in basic and acidic residues; that stretch reads DPDRNQDRDR. A compositionally biased stretch (polar residues) spans 75 to 91; sequence STSSSTFDSGLTRSPSA. Positions 124–137 are enriched in basic and acidic residues; the sequence is GLDDRDRDPERLIS. Polar residues-rich tracts occupy residues 138–150, 162–173, and 242–251; these read DRTSSGPPLTSVN, ENSSYQDFSPRN, and AFSTDNSPIH. Positions 263–273 are enriched in low complexity; sequence RSPQPSRPSSP. Positions 346-607 constitute a Protein kinase domain; sequence WKKGKLIGRG…ASMLLEHRFL (262 aa). Residues 352 to 360 and lysine 375 each bind ATP; that span reads IGRGTFGSV. Aspartate 472 (proton acceptor) is an active-site residue. Residues 610-633 are compositionally biased toward polar residues; sequence SLQPTSPSNSDVSQLFNGMNITEP. Residues 610 to 716 form a disordered region; the sequence is SLQPTSPSNS…RRTGVTSDHL (107 aa). Phosphoserine; by PBL27 is present on residues serine 617 and serine 622. Basic and acidic residues predominate over residues 634-648; the sequence is SSRREKPNFKLDQVP. Composition is skewed to polar residues over residues 652-661 and 674-685; these read NMTSSESESG and LTGTVNRLSPRS. Phosphoserine; by PBL27 is present on residues serine 658 and serine 660. Position 677 is a phosphothreonine; by PBL27 (threonine 677). A Phosphoserine; by PBL27 modification is found at serine 685. A compositionally biased stretch (basic and acidic residues) spans 703-716; it reads SSDRRRTGVTSDHL.

Belongs to the protein kinase superfamily. STE Ser/Thr protein kinase family. MAP kinase kinase kinase subfamily. In terms of assembly, interacts with PBL27 at the plasma membrane; disassociation is induced by chitin perception by the CERK1 complex. Interacts with MKK2, MKK4, and MKK5 mainly in the cytosol. Phosphorylated by PBL27 during chitin-mediated signaling in a CERK1-dependent manner. In terms of tissue distribution, mostly expressed in flower buds. Also present in pollen, roots, leaves and seedlings, and, at low levels, in stems and immature siliques.

It is found in the cell membrane. The protein resides in the cytoplasm. The protein localises to the cytosol. The catalysed reaction is L-seryl-[protein] + ATP = O-phospho-L-seryl-[protein] + ADP + H(+). It carries out the reaction L-threonyl-[protein] + ATP = O-phospho-L-threonyl-[protein] + ADP + H(+). Its function is as follows. Mitogen-activated protein kinase (MAPK) involved in the transduction of signal between the host cell surface chitin receptor complex CERK1-LYK5 and the intracellular MAPK cascade that leads to chitin-induced immunity. Phosphorylates and activates MAPK targets (e.g. MKK4, MKK5, and possibly MKK2) when phosphorylated by PBL27 after elicitation by chitin. Required for resistance to the fungus A.brassicicola. The sequence is that of Mitogen-activated protein kinase kinase kinase 5 from Arabidopsis thaliana (Mouse-ear cress).